A 910-amino-acid chain; its full sequence is MAEGVVLFGVHKLWELLNRESARLNGIGEQVDGLKRQLGRLQSLLKDADAKKHESERVRNFLEDVRDIVYDAEDIIESFLLNEFRTKEKGIKKHARRLACFLVDRRKFASDIKGITKKISEVIGGMKSLGIQEIIDGASSMSLQERQREQKEIRQTFANSSESDLVGVEQSVEALAGHLVENDNIQVVSISGMGGIGKTTLARQVFHHDMVQRHFDGFAWVFVSQQFTQKHVWQRIWQELQPQNGDISHMDEHILQGKLFKLLETGRYLVVLDDVWKEEDWDRIKAVFPRKRGWKMLLTSRNEGVGIHADPKSFGFKTRILTPEESWKLCEKIVFHRRDETGTLSEVRVDEDMEAMGKEMVTCCGGLPLAVKVLGGLLATKHTVPEWKRVYDNIGPHLAGRSSLDDNLNSIYRVLSLSYEDLPMCLKHCFLYLAHFPEYYEIHVKRLFNYLAAEGIITSSDDGTTIQDKGEDYLEELARRNMITIDKNYMFLRKKHCQMHDMMREVCLSKAKEENFLEIFKVSTATSAINARSLSKSRRLSVHGGNALQSLGQTINKKVRSLLYFAFEDEFCILESTTPCFRSLPLLRVLDLSRVKFEGGKLPSSIGDLIHLRFLSLHRAWISHLPSSLRNLKLLLYLNLGFNGMVHVPNVLKEMQELRYLQLPMSMHDKTKLELSDLVNLESLMNFSTKYASVMDLLHMTKLRELSLFITDGSSDTLSSSLGQLRSLEVLHLYDRQEPRVAYHGGEIVLNCIHLKELELAIHMPRFPDQYLFHPHLSHIYLWCCSMEEDPIPILERLLHLKSVILTFGAFVGRRMVCSKGGFPQLCFLKLEELEELEEWIVEEGSMPLLRALTICNCRKLKLPGGINYITSLKELTIVGMKWKEKLVPGGEDYYKVQNIPNVQFINCDE.

A coiled-coil region spans residues 22–60 (ARLNGIGEQVDGLKRQLGRLQSLLKDADAKKHESERVRN). Positions 169 to 461 (EQSVEALAGH…AAEGIITSSD (293 aa)) constitute an NB-ARC domain. 6 LRR repeats span residues 584-609 (LPLLRVLDLSRVKFEGGKLPSSIGDL), 610-632 (IHLRFLSLHRAWISHLPSSLRNL), 634-655 (LLLYLNLGFNGMVHVPNVLKEM), 700-725 (MTKLRELSLFITDGSSDTLSSSLGQL), 726-751 (RSLEVLHLYDRQEPRVAYHGGEIVLN), and 847-871 (MPLLRALTICNCRKLKLPGGINYIT).

This sequence belongs to the disease resistance NB-LRR family. RPP8/HRT subfamily.

Its function is as follows. Confers susceptibility to the fungus Cochliobolus victoriae by conditioning victorin-dependent (victorin is a toxin synthesized by C.victoriae) induction of defense-associated proteins. The sequence is that of Disease susceptibility protein LOV1 (LOV1) from Arabidopsis thaliana (Mouse-ear cress).